Consider the following 130-residue polypeptide: Glycine cleavage system H protein (130 aa).

Positions 24 to 106 (EYTVGITEHA…YHEGWLFRIK (83 aa)) constitute a Lipoyl-binding domain. An N6-lipoyllysine modification is found at Lys65.

The protein belongs to the GcvH family. The glycine cleavage system is composed of four proteins: P, T, L and H. Requires (R)-lipoate as cofactor.

In terms of biological role, the glycine cleavage system catalyzes the degradation of glycine. The H protein shuttles the methylamine group of glycine from the P protein to the T protein. The polypeptide is Glycine cleavage system H protein (Photorhabdus laumondii subsp. laumondii (strain DSM 15139 / CIP 105565 / TT01) (Photorhabdus luminescens subsp. laumondii)).